A 166-amino-acid polypeptide reads, in one-letter code: UPF0304 protein PBPRA2768 (166 aa).

This sequence belongs to the UPF0304 family.

The chain is UPF0304 protein PBPRA2768 from Photobacterium profundum (strain SS9).